The following is a 208-amino-acid chain: Pectinesterase inhibitor 6 (208 aa).

The signal sequence occupies residues 1-30 (MTSSSSSPITFTLLLLLSLLVALNPNPSLA). The cysteines at positions 53 and 62 are disulfide-linked. N-linked (GlcNAc...) asparagine glycans are attached at residues Asn-54 and Asn-75. Residues Cys-118 and Cys-165 are joined by a disulfide bond.

It belongs to the PMEI family.

The protein resides in the secreted. It localises to the extracellular space. Its subcellular location is the apoplast. Functionally, pectin methylesterase (PME) inhibitor that targets PME from seeds and modulates PME activity and pectin methylesterification during seed germination. Promotes mucilage release by limiting methylesterification of homogalacturonan in seed coat epidermal cells. The protein is Pectinesterase inhibitor 6 of Arabidopsis thaliana (Mouse-ear cress).